The chain runs to 818 residues: Phenylalanine--tRNA ligase beta subunit (818 aa).

In terms of domain architecture, tRNA-binding spans 39-148 (AAELQKFEVA…EDAVVGENFT (110 aa)). The 76-residue stretch at 423-498 (PQKKPLDFSA…RIYGYDKIES (76 aa)) folds into the B5 domain. Positions 476, 482, 485, and 486 each coordinate Mg(2+). Residues 724 to 817 (SDFQANFRDY…IEQKFQGTLR (94 aa)) enclose the FDX-ACB domain.

Belongs to the phenylalanyl-tRNA synthetase beta subunit family. Type 1 subfamily. As to quaternary structure, tetramer of two alpha and two beta subunits. It depends on Mg(2+) as a cofactor.

The protein resides in the cytoplasm. It catalyses the reaction tRNA(Phe) + L-phenylalanine + ATP = L-phenylalanyl-tRNA(Phe) + AMP + diphosphate + H(+). The sequence is that of Phenylalanine--tRNA ligase beta subunit from Rickettsia felis (strain ATCC VR-1525 / URRWXCal2) (Rickettsia azadi).